A 287-amino-acid polypeptide reads, in one-letter code: Lipoyl synthase (287 aa).

[4Fe-4S] cluster is bound by residues Cys34, Cys39, Cys45, Cys60, Cys64, Cys67, and Ser273. The region spanning 46–262 (WNKRHATVMI…KYIAYSKGFL (217 aa)) is the Radical SAM core domain.

The protein belongs to the radical SAM superfamily. Lipoyl synthase family. The cofactor is [4Fe-4S] cluster.

It is found in the cytoplasm. It catalyses the reaction [[Fe-S] cluster scaffold protein carrying a second [4Fe-4S](2+) cluster] + N(6)-octanoyl-L-lysyl-[protein] + 2 oxidized [2Fe-2S]-[ferredoxin] + 2 S-adenosyl-L-methionine + 4 H(+) = [[Fe-S] cluster scaffold protein] + N(6)-[(R)-dihydrolipoyl]-L-lysyl-[protein] + 4 Fe(3+) + 2 hydrogen sulfide + 2 5'-deoxyadenosine + 2 L-methionine + 2 reduced [2Fe-2S]-[ferredoxin]. It functions in the pathway protein modification; protein lipoylation via endogenous pathway; protein N(6)-(lipoyl)lysine from octanoyl-[acyl-carrier-protein]: step 2/2. Functionally, catalyzes the radical-mediated insertion of two sulfur atoms into the C-6 and C-8 positions of the octanoyl moiety bound to the lipoyl domains of lipoate-dependent enzymes, thereby converting the octanoylated domains into lipoylated derivatives. The sequence is that of Lipoyl synthase from Wolbachia pipientis wMel.